Consider the following 544-residue polypeptide: Chitin-inducible gibberellin-responsive protein 2 (544 aa).

The tract at residues 1–123 (MADTPTSRMI…VGASCVTEDP (123 aa)) is disordered. Polar residues-rich tracts occupy residues 15–30 (NIPS…SDNP), 63–74 (SQATPNKYTLDS), and 86–101 (PSSQ…PLSQ). The GRAS domain maps to 165 to 544 (RMMGIPRGNL…RPLVVSSAWH (380 aa)). Residues 172–232 (GNLKELLIAC…VARLASSGIS (61 aa)) are leucine repeat I (LRI). Positions 251 to 316 (MHFLYEACPY…GGPPTVRITG (66 aa)) are VHIID. The VHIID signature appears at 282 to 286 (IHIID). Positions 332–364 (LVGRRLSHIASLCKVPFEFHPLAISGSKVEAAH) are leucine repeat II (LRII). The tract at residues 373–467 (LAVNFTLELH…QHCLAREIVN (95 aa)) is PFYRE. The tract at residues 470 to 544 (ACEGEERAER…RPLVVSSAWH (75 aa)) is SAW.

The protein belongs to the GRAS family.

The protein resides in the nucleus. In terms of biological role, may play a regulatory role in the early step of oligosaccharide elicitor response, downstream of the membrane-associated high-affinity chitin-binding protein. The polypeptide is Chitin-inducible gibberellin-responsive protein 2 (CIGR2) (Oryza sativa subsp. japonica (Rice)).